Consider the following 757-residue polypeptide: Myb-related protein A (757 aa).

HTH myb-type domains lie at 30-81, 82-137, and 138-188; these read KKIC…QKVL, NPEL…NPEV, and KKSS…RRKV. DNA-binding regions (H-T-H motif) lie at residues 58-81, 110-133, and 161-184; these read WAFI…QKVL, WSLI…HNHL, and WAEI…NSTM. Residues 187 to 209 form a disordered region; the sequence is KVEQEGYLQDGTKSSSERTGSST. Positions 197 to 209 are enriched in polar residues; sequence GTKSSSERTGSST. The tract at residues 235-300 is transcriptional activation domain; sequence IPVYQYASPE…RLSSQAGSLP (66 aa). The segment at 303-558 is negative regulatory domain; the sequence is SGSFVMEDCV…IRRSLLGSTP (256 aa).

In terms of assembly, component of the DREAM complex. As to expression, expressed ubiquitously.

Its subcellular location is the nucleus. Its function is as follows. Strong transcriptional activator; DNA-binding protein that specifically recognize the sequence 5'-YAAC[GT]G-3'. Could have a role in the proliferation and/or differentiation of neurogenic, spermatogenic and B-lymphoid cells. The polypeptide is Myb-related protein A (MYBL1) (Gallus gallus (Chicken)).